A 593-amino-acid chain; its full sequence is UvrABC system protein C (593 aa).

Residues 17–94 enclose the GIY-YIG domain; that stretch reads MEPGCYLMKD…IKQYQPRYNI (78 aa). The region spanning 199–234 is the UVR domain; that stretch reads KTILKSLEERMLTASESLDFERAKEYRDLIQHIQNL.

It belongs to the UvrC family. Interacts with UvrB in an incision complex.

It is found in the cytoplasm. In terms of biological role, the UvrABC repair system catalyzes the recognition and processing of DNA lesions. UvrC both incises the 5' and 3' sides of the lesion. The N-terminal half is responsible for the 3' incision and the C-terminal half is responsible for the 5' incision. In Staphylococcus aureus (strain USA300), this protein is UvrABC system protein C.